Reading from the N-terminus, the 472-residue chain is Sarcalumenin (472 aa).

Residues 1-20 (MKRLNLLCCCVASLLLLGTA) form the signal peptide. Leu59 carries an N-linked (GlcNAc...) asparagine glycan. The Dynamin-type G domain occupies 89–330 (ITSKPMVLFL…IENRMENKIA (242 aa)). Residues 99–106 (GPWSVGKS) are G1 motif. The segment at 127–128 (EP) is G2 motif. The G3 motif stretch occupies residues 189 to 192 (DTPG). Residues 254–257 (NKAD) are G4 motif. Leu278 is a region of interest (G5 motif). N-linked (GlcNAc...) asparagine glycans are attached at residues Asn280 and Asn388.

The protein belongs to the TRAFAC class dynamin-like GTPase superfamily. Dynamin/Fzo/YdjA family. N-glycosylated.

The protein resides in the sarcoplasmic reticulum lumen. The protein localises to the sarcoplasmic reticulum membrane. This chain is Sarcalumenin (SRL), found in Gallus gallus (Chicken).